The primary structure comprises 221 residues: ATP phosphoribosyltransferase (221 aa).

It belongs to the ATP phosphoribosyltransferase family. Short subfamily. In terms of assembly, heteromultimer composed of HisG and HisZ subunits.

The protein localises to the cytoplasm. The enzyme catalyses 1-(5-phospho-beta-D-ribosyl)-ATP + diphosphate = 5-phospho-alpha-D-ribose 1-diphosphate + ATP. It functions in the pathway amino-acid biosynthesis; L-histidine biosynthesis; L-histidine from 5-phospho-alpha-D-ribose 1-diphosphate: step 1/9. In terms of biological role, catalyzes the condensation of ATP and 5-phosphoribose 1-diphosphate to form N'-(5'-phosphoribosyl)-ATP (PR-ATP). Has a crucial role in the pathway because the rate of histidine biosynthesis seems to be controlled primarily by regulation of HisG enzymatic activity. The polypeptide is ATP phosphoribosyltransferase (Symbiobacterium thermophilum (strain DSM 24528 / JCM 14929 / IAM 14863 / T)).